The primary structure comprises 281 residues: Pantothenate synthetase (281 aa).

ATP is bound at residue 30 to 37 (MGALHRGH). Residue His-37 is the Proton donor of the active site. Residue Gln-61 coordinates (R)-pantoate. Residue Gln-61 participates in beta-alanine binding. 147 to 150 (GEKD) is an ATP binding site. Residue Gln-153 coordinates (R)-pantoate. ATP contacts are provided by residues Ile-176 and 184-187 (LSSR).

The protein belongs to the pantothenate synthetase family. As to quaternary structure, homodimer.

It is found in the cytoplasm. The enzyme catalyses (R)-pantoate + beta-alanine + ATP = (R)-pantothenate + AMP + diphosphate + H(+). It functions in the pathway cofactor biosynthesis; (R)-pantothenate biosynthesis; (R)-pantothenate from (R)-pantoate and beta-alanine: step 1/1. In terms of biological role, catalyzes the condensation of pantoate with beta-alanine in an ATP-dependent reaction via a pantoyl-adenylate intermediate. This Porphyromonas gingivalis (strain ATCC 33277 / DSM 20709 / CIP 103683 / JCM 12257 / NCTC 11834 / 2561) protein is Pantothenate synthetase.